We begin with the raw amino-acid sequence, 150 residues long: 3-hydroxyacyl-[acyl-carrier-protein] dehydratase FabZ (150 aa).

His-54 is an active-site residue.

This sequence belongs to the thioester dehydratase family. FabZ subfamily.

Its subcellular location is the cytoplasm. The enzyme catalyses a (3R)-hydroxyacyl-[ACP] = a (2E)-enoyl-[ACP] + H2O. In terms of biological role, involved in unsaturated fatty acids biosynthesis. Catalyzes the dehydration of short chain beta-hydroxyacyl-ACPs and long chain saturated and unsaturated beta-hydroxyacyl-ACPs. This is 3-hydroxyacyl-[acyl-carrier-protein] dehydratase FabZ from Vibrio atlanticus (strain LGP32) (Vibrio splendidus (strain Mel32)).